Consider the following 171-residue polypeptide: Protein GrpE (171 aa).

A disordered region spans residues 1-22 (MNHEQPDIESQQSAADAAATAG).

Belongs to the GrpE family. Homodimer.

It is found in the cytoplasm. In terms of biological role, participates actively in the response to hyperosmotic and heat shock by preventing the aggregation of stress-denatured proteins, in association with DnaK and GrpE. It is the nucleotide exchange factor for DnaK and may function as a thermosensor. Unfolded proteins bind initially to DnaJ; upon interaction with the DnaJ-bound protein, DnaK hydrolyzes its bound ATP, resulting in the formation of a stable complex. GrpE releases ADP from DnaK; ATP binding to DnaK triggers the release of the substrate protein, thus completing the reaction cycle. Several rounds of ATP-dependent interactions between DnaJ, DnaK and GrpE are required for fully efficient folding. The sequence is that of Protein GrpE from Stenotrophomonas maltophilia (strain K279a).